The chain runs to 228 residues: Cutinase (228 aa).

Residues 1 to 16 (MKFLSIISLAVSLVAA) form the signal peptide. Cys49 and Cys129 form a disulfide bridge. Ser140 (nucleophile) is an active-site residue. Cys191 and Cys198 are oxidised to a cystine. Asp195 is an active-site residue. The active-site Proton donor/acceptor is the His208.

The protein belongs to the cutinase family. The 2 disulfide bonds play a critical role in holding the catalytic residues in juxta-position; reduction of the disulfide bridges results in the complete inactivation of the enzyme.

It localises to the secreted. The enzyme catalyses cutin + H2O = cutin monomers.. Partially inhibited by berberine; higher inhibitory effects are observed with longer chain polyester substrates. Catalyzes the hydrolysis of complex carboxylic polyesters found in the cell wall of plants. Degrades cutin, a macromolecule that forms the structure of the plant cuticle. Allows pathogenic fungi to penetrate through the cuticular barrier into the host plant during the initial stage of fungal infection. The polypeptide is Cutinase (CUTA) (Colletotrichum truncatum (Anthracnose fungus)).